The sequence spans 156 residues: Ribosome maturation factor RimP (156 aa).

It belongs to the RimP family.

It is found in the cytoplasm. Its function is as follows. Required for maturation of 30S ribosomal subunits. The chain is Ribosome maturation factor RimP from Fusobacterium nucleatum subsp. nucleatum (strain ATCC 25586 / DSM 15643 / BCRC 10681 / CIP 101130 / JCM 8532 / KCTC 2640 / LMG 13131 / VPI 4355).